An 833-amino-acid polypeptide reads, in one-letter code: Mannosyl-oligosaccharide glucosidase (833 aa).

The Cytoplasmic segment spans residues M1–K10. Residues T11–I28 form a helical; Signal-anchor for type II membrane protein membrane-spanning segment. The Lumenal segment spans residues S29–F833. 2 residues coordinate substrate: N42 and N122. N-linked (GlcNAc...) asparagine glycans are attached at residues N42, N122, and N135. E143 provides a ligand contact to substrate. The active-site Proton donor is D601. A disulfide bond links C669 and C685. N787 carries N-linked (GlcNAc...) asparagine glycosylation. E804 (proton acceptor) is an active-site residue.

Belongs to the glycosyl hydrolase 63 family. Post-translationally, N-glycosylated.

It is found in the endoplasmic reticulum membrane. It carries out the reaction N(4)-(alpha-D-Glc-(1-&gt;2)-alpha-D-Glc-(1-&gt;3)-alpha-D-Glc-(1-&gt;3)-alpha-D-Man-(1-&gt;2)-alpha-D-Man-(1-&gt;2)-alpha-D-Man-(1-&gt;3)-[alpha-D-Man-(1-&gt;2)-alpha-D-Man-(1-&gt;3)-[alpha-D-Man-(1-&gt;2)-alpha-D-Man-(1-&gt;6)]-alpha-D-Man-(1-&gt;6)]-beta-D-Man-(1-&gt;4)-beta-D-GlcNAc-(1-&gt;4)-beta-D-GlcNAc)-L-asparaginyl-[protein] + H2O = N(4)-(alpha-D-Glc-(1-&gt;3)-alpha-D-Glc-(1-&gt;3)-alpha-D-Man-(1-&gt;2)-alpha-D-Man-(1-&gt;2)-alpha-D-Man-(1-&gt;3)-[alpha-D-Man-(1-&gt;2)-alpha-D-Man-(1-&gt;3)-[alpha-D-Man-(1-&gt;2)-alpha-D-Man-(1-&gt;6)]-alpha-D-Man-(1-&gt;6)]-beta-D-Man-(1-&gt;4)-beta-D-GlcNAc-(1-&gt;4)-beta-D-GlcNAc)-L-asparaginyl-[protein] + beta-D-glucose. The protein operates within glycan metabolism; N-glycan degradation. With respect to regulation, miglitol is an effective inhibitor at 1 mM. In terms of biological role, cleaves the distal alpha 1,2-linked glucose residue from the Glc(3)Man(9)GlcNAc(2) oligosaccharide precursor highly specifically. Seems to play a role in beta-1,6-glucan synthesis. The protein is Mannosyl-oligosaccharide glucosidase (CWH41) of Saccharomyces cerevisiae (strain ATCC 204508 / S288c) (Baker's yeast).